Reading from the N-terminus, the 48-residue chain is U1-theraphotoxin-Agm1a (48 aa).

3 cysteine pairs are disulfide-bonded: cysteine 4/cysteine 34, cysteine 8/cysteine 40, and cysteine 22/cysteine 45. Methionine 44 carries the post-translational modification Methionine sulfoxide; partial.

This sequence belongs to the neurotoxin 12 (Hwtx-2) family. 01 (Ap1a) subfamily. In terms of tissue distribution, expressed by the venom gland.

It localises to the secreted. Its function is as follows. Is toxic to both insects and mammals. Induces reversible paralysis when injected into S.frugiperda larvae. Reduces both the amplitude and frequency of responses from muscle (GF-TTM and GF-DLM) pathways in the D.melanogaster giant fiber circuit, suggesting an action at the neuromuscular junction, which is mediated by glutamatergic receptors. In mice, intracranial injection of 30 ug causes increased urination, myoclonus, hypermotility with circular movements followed by respiratory and generalized seizures resulting in death within 25-35 minutes of injection. This Acanthoscurria gomesiana (Tarantula spider) protein is U1-theraphotoxin-Agm1a.